The chain runs to 858 residues: Heat shock protein 105 kDa (858 aa).

Position 2 is an N-acetylserine (Ser2). An N6-acetyllysine modification is found at Lys471. Disordered regions lie at residues Lys500–Ala585 and Val801–Asp858. A compositionally biased stretch (acidic residues) spans Glu504–Met515. Phosphoserine is present on residues Ser509 and Ser510. A compositionally biased stretch (polar residues) spans Gln533–Gly549. The residue at position 558 (Ser558) is a Phosphoserine. Thr562 bears the Phosphothreonine mark. 2 stretches are compositionally biased toward basic and acidic residues: residues Glu564 to Ala585 and Pro806 to Arg815. Ser810 carries the phosphoserine modification. Residue Thr816 is modified to Phosphothreonine.

It belongs to the heat shock protein 70 family. Interacts with HSPA8/HSC70. Interacts with HSPA1A (via NBD) and HSPA1B (via NBD). In terms of processing, phosphorylation on Ser-509 may be important for regulation of the HSPA8/HSC70 chaperone activity. Expressed in neurons in the cerebrum and Purkinje cells in the cerebellum (at protein level). Expressed in testis and no expression or only low-level expression in liver, spleen, lung, and kidney (at protein level). Highly expressed in the brain and moderately expressed in lung, heart, thymus, spleen, liver, and small intestine.

It is found in the cytoplasm. The protein localises to the nucleus. Its function is as follows. Acts as a nucleotide-exchange factor (NEF) for chaperone proteins HSPA1A and HSPA1B, promoting the release of ADP from HSPA1A/B thereby triggering client/substrate protein release. Prevents the aggregation of denatured proteins in cells under severe stress, on which the ATP levels decrease markedly. Inhibits HSPA8/HSC70 ATPase and chaperone activities. The sequence is that of Heat shock protein 105 kDa (Hsph1) from Mus musculus (Mouse).